We begin with the raw amino-acid sequence, 207 residues long: ATP synthase subunit 5, mitochondrial (207 aa).

Belongs to the ATPase delta chain family. F-type ATPases have 2 components, CF(1) - the catalytic core - and CF(0) - the membrane proton channel. CF(1) has five subunits: alpha(3), beta(3), gamma(1), delta(1), epsilon(1). CF(0) has three main subunits: a, b and c.

It localises to the mitochondrion. The protein resides in the mitochondrion inner membrane. Mitochondrial membrane ATP synthase (F(1)F(0) ATP synthase or Complex V) produces ATP from ADP in the presence of a proton gradient across the membrane which is generated by electron transport complexes of the respiratory chain. F-type ATPases consist of two structural domains, F(1) - containing the extramembraneous catalytic core and F(0) - containing the membrane proton channel, linked together by a central stalk and a peripheral stalk. During catalysis, ATP synthesis in the catalytic domain of F(1) is coupled via a rotary mechanism of the central stalk subunits to proton translocation. Part of the complex F(0) domain and the peripheric stalk, which acts as a stator to hold the catalytic alpha(3)beta(3) subcomplex and subunit a/ATP6 static relative to the rotary elements. This chain is ATP synthase subunit 5, mitochondrial (ATP5), found in Candida glabrata (strain ATCC 2001 / BCRC 20586 / JCM 3761 / NBRC 0622 / NRRL Y-65 / CBS 138) (Yeast).